The following is a 186-amino-acid chain: Nuclear transcription factor Y subunit B-1 (186 aa).

Residues 1-24 (MAGNKKRGGRNMDQVKKAAVRSDG) form a disordered region. Residues 34 to 40 (LPMANLV) mediate DNA binding. The segment at 61–72 (THDCAVEFVGFV) is subunit association domain (SAD). Positions 123 to 142 (GGNRRVAPPPPAAATPLTPG) are disordered.

Belongs to the NFYB/HAP3 subunit family. As to quaternary structure, heterotrimeric transcription factor composed of three components, NF-YA, NF-YB and NF-YC. NF-YB and NF-YC must interact and dimerize for NF-YA association and DNA binding. Interacts with MADS18. Forms a ternary complex with the MADS6-MADS18 heterodimer. In terms of tissue distribution, expressed in developing kernels.

The protein resides in the nucleus. Functionally, component of the NF-Y/HAP transcription factor complex. The NF-Y complex stimulates the transcription of various genes by recognizing and binding to a CCAAT motif in promoters. May act through association with MADS-box proteins. May regulate the expression of genes involved in flowering. This Oryza sativa subsp. japonica (Rice) protein is Nuclear transcription factor Y subunit B-1 (NFYB1).